The chain runs to 454 residues: uncharacterized protein (454 aa).

An HNH domain is found at 364–405; it reads CSRPGCDAPAYHSEVHHVTPWTTTHRTDINDLTLACGPDNRL.

This sequence belongs to the Rv1128c/1148c/1588c/1702c/1945/3466 family.

This is an uncharacterized protein from Mycobacterium tuberculosis (strain CDC 1551 / Oshkosh).